The sequence spans 206 residues: LexA repressor (206 aa).

The H-T-H motif DNA-binding region spans 28-48; it reads RAEIARRLGFKSANAAEEHLK. Catalysis depends on for autocatalytic cleavage activity residues Ser-123 and Lys-160.

This sequence belongs to the peptidase S24 family. As to quaternary structure, homodimer.

The catalysed reaction is Hydrolysis of Ala-|-Gly bond in repressor LexA.. In terms of biological role, represses a number of genes involved in the response to DNA damage (SOS response), including recA and lexA. In the presence of single-stranded DNA, RecA interacts with LexA causing an autocatalytic cleavage which disrupts the DNA-binding part of LexA, leading to derepression of the SOS regulon and eventually DNA repair. This is LexA repressor from Shewanella halifaxensis (strain HAW-EB4).